Here is a 159-residue protein sequence, read N- to C-terminus: Neuroglobin (159 aa).

In terms of domain architecture, Globin spans 3–151 (KLSEKDKGLI…VVSAMTRGWA (149 aa)). Heme b-binding residues include H66 and H98.

Belongs to the globin family. As to quaternary structure, monomer. Homodimers and homotetramers. Mainly monomeric but also detected as part of homodimers and homotetramers. Detected in brain, eye and gill, but not in muscle and blood (at protein level). Particularly high expression in the periventral zone of tectum opticum, with significant expression detected in white matter, preglomerular nucleus, posterior tubular nucleus, torus longitudinalis, hypothalamus, pituitary gland, posterior tuberculum, hypothalamus, synencephalon and formatio reticularis. Detected also in brain regions of the visual system, predominantly in parts of tectum opticum and torus semicircularis, area dorsalis telencephali and medulla oblongata. Strong expression observed in sensory epithelium of peripheral olfactory organ, and outer and inner nuclear layers and ganglion cell layer of retina.

The protein resides in the cytoplasm. It localises to the cytosol. The protein localises to the mitochondrion matrix. The enzyme catalyses Fe(III)-heme b-[protein] + nitric oxide + H2O = Fe(II)-heme b-[protein] + nitrite + 2 H(+). Monomeric globin with a bis-histidyl six-coordinate heme-iron atom through which it can bind dioxygen, carbon monoxide and nitric oxide. Could help transport oxygen and increase its availability to the metabolically active neuronal tissues, though its low quantity in tissues as well as its high affinity for dioxygen, which may limit its oxygen-releasing ability, argue against it. The ferrous/deoxygenated form exhibits a nitrite reductase activity and it could produce nitric oxide which in turn inhibits cellular respiration in response to hypoxia. In its ferrous/deoxygenated state, it may also exhibit GDI (Guanine nucleotide Dissociation Inhibitor) activity toward heterotrimeric G-alpha proteins, thereby regulating signal transduction to facilitate neuroprotective responses in the wake of hypoxia and associated oxidative stress. The protein is Neuroglobin (ngb) of Danio rerio (Zebrafish).